Here is a 171-residue protein sequence, read N- to C-terminus: Regulatory protein RecX (171 aa).

This sequence belongs to the RecX family.

It localises to the cytoplasm. Its function is as follows. Modulates RecA activity. This is Regulatory protein RecX from Mycobacterium leprae (strain Br4923).